The chain runs to 327 residues: Sideroflexin FSF1 (327 aa).

The residue at position 2 (Ala-2) is an N-acetylalanine. 4 helical membrane-spanning segments follow: residues 98–118, 143–163, 179–199, and 272–292; these read NLVV…TVFW, SQLL…ALGL, LILG…VNVF, and ANLG…LGIF.

This sequence belongs to the sideroflexin family.

The protein localises to the mitochondrion membrane. Its function is as follows. Mitochondrial amino-acid transporter that mediates transport of serine into mitochondria. In Saccharomyces cerevisiae (strain ATCC 204508 / S288c) (Baker's yeast), this protein is Sideroflexin FSF1.